Reading from the N-terminus, the 394-residue chain is Elongation factor Tu (394 aa).

One can recognise a tr-type G domain in the interval 10 to 204; the sequence is KPHVNVGTIG…ALDTYIPEPE (195 aa). Positions 19 to 26 are G1; that stretch reads GHVDHGKT. Residue 19–26 participates in GTP binding; that stretch reads GHVDHGKT. Residue T26 coordinates Mg(2+). Residues 60-64 are G2; sequence GITIN. A G3 region spans residues 81–84; sequence DCPG. GTP-binding positions include 81–85 and 136–139; these read DCPGH and NKCD. The interval 136-139 is G4; sequence NKCD. The G5 stretch occupies residues 174 to 176; sequence SAL.

This sequence belongs to the TRAFAC class translation factor GTPase superfamily. Classic translation factor GTPase family. EF-Tu/EF-1A subfamily. Monomer.

Its subcellular location is the cytoplasm. It carries out the reaction GTP + H2O = GDP + phosphate + H(+). In terms of biological role, GTP hydrolase that promotes the GTP-dependent binding of aminoacyl-tRNA to the A-site of ribosomes during protein biosynthesis. This Shewanella sediminis (strain HAW-EB3) protein is Elongation factor Tu.